Here is a 223-residue protein sequence, read N- to C-terminus: MQLKPMEINPEMLNKVLTRLGVAGHWRFADVLGLEEESLGSVPAPACALLLLFPLTAQHENFRKKQIEELKGQEVSPKVYFMKQTIGNSCGTIGLIHAVANNQDKLEFEDGSVLKQFLSETEKLSPEDRAKCFEKNEAIQAAHDAVAQEGQCRVDDKVNFHFILFNNVDGHLYELDGRMPFPVNHGASSEDSLLQDAAKVCREFTEREQGEVRFSAVALCKAA.

Position 1 is an N-acetylmethionine (methionine 1). The UCH catalytic domain occupies 2–221; sequence QLKPMEINPE…VRFSAVALCK (220 aa). Residues 5–10 form an interaction with ubiquitin region; sequence PMEINP. The active-site Nucleophile is the cysteine 90. Serine 125 is subject to Phosphoserine. The active-site Proton donor is histidine 161. Residues 211 to 216 form an interaction with ubiquitin region; that stretch reads EVRFSA. Cysteine 220 carries S-farnesyl cysteine lipidation. The propeptide at 221 to 223 is removed in mature form; that stretch reads KAA.

It belongs to the peptidase C12 family. As to quaternary structure, monomer. Homodimer. Interacts with COPS5 and SNCA. O-glycosylated.

The protein localises to the cytoplasm. It is found in the endoplasmic reticulum membrane. The catalysed reaction is Thiol-dependent hydrolysis of ester, thioester, amide, peptide and isopeptide bonds formed by the C-terminal Gly of ubiquitin (a 76-residue protein attached to proteins as an intracellular targeting signal).. In terms of biological role, ubiquitin-protein hydrolase involved both in the processing of ubiquitin precursors and of ubiquitinated proteins. This enzyme is a thiol protease that recognizes and hydrolyzes a peptide bond at the C-terminal glycine of ubiquitin. Also binds to free monoubiquitin and may prevent its degradation in lysosomes. The homodimer may have ATP-independent ubiquitin ligase activity. This is Ubiquitin carboxyl-terminal hydrolase isozyme L1 (UCHL1) from Sus scrofa (Pig).